The sequence spans 437 residues: Histidinol dehydrogenase (437 aa).

NAD(+)-binding residues include Tyr133, Gln191, and Asn214. Ser240, Gln262, and His265 together coordinate substrate. Zn(2+) contacts are provided by Gln262 and His265. Residues Glu329 and His330 each act as proton acceptor in the active site. Residues His330, Asp363, Glu417, and His422 each coordinate substrate. Residue Asp363 coordinates Zn(2+). Position 422 (His422) interacts with Zn(2+).

It belongs to the histidinol dehydrogenase family. Homodimer. Zn(2+) serves as cofactor.

The catalysed reaction is L-histidinol + 2 NAD(+) + H2O = L-histidine + 2 NADH + 3 H(+). It participates in amino-acid biosynthesis; L-histidine biosynthesis; L-histidine from 5-phospho-alpha-D-ribose 1-diphosphate: step 9/9. Functionally, catalyzes the sequential NAD-dependent oxidations of L-histidinol to L-histidinaldehyde and then to L-histidine. The protein is Histidinol dehydrogenase of Blochmanniella floridana.